Reading from the N-terminus, the 91-residue chain is MGRSLKKGPFISDSLLRKIEKQNSNDDKAVIKTWSRASTILPLMIGHTIAVHNGKSHIPVFITEQMVGHKLGEFAPTRTYRGHIRDKKGAR.

It belongs to the universal ribosomal protein uS19 family.

Functionally, protein S19 forms a complex with S13 that binds strongly to the 16S ribosomal RNA. In Prochlorococcus marinus (strain NATL1A), this protein is Small ribosomal subunit protein uS19.